We begin with the raw amino-acid sequence, 291 residues long: 4-diphosphocytidyl-2-C-methyl-D-erythritol kinase (291 aa).

The active site involves K8. Residue 89-99 coordinates ATP; the sequence is PIGSGIGGGSS. D131 is a catalytic residue.

The protein belongs to the GHMP kinase family. IspE subfamily.

The enzyme catalyses 4-CDP-2-C-methyl-D-erythritol + ATP = 4-CDP-2-C-methyl-D-erythritol 2-phosphate + ADP + H(+). It participates in isoprenoid biosynthesis; isopentenyl diphosphate biosynthesis via DXP pathway; isopentenyl diphosphate from 1-deoxy-D-xylulose 5-phosphate: step 3/6. Functionally, catalyzes the phosphorylation of the position 2 hydroxy group of 4-diphosphocytidyl-2C-methyl-D-erythritol. The protein is 4-diphosphocytidyl-2-C-methyl-D-erythritol kinase of Chlamydia abortus (strain DSM 27085 / S26/3) (Chlamydophila abortus).